The primary structure comprises 467 residues: Argininosuccinate lyase (467 aa).

It belongs to the lyase 1 family. Argininosuccinate lyase subfamily.

The protein localises to the cytoplasm. It carries out the reaction 2-(N(omega)-L-arginino)succinate = fumarate + L-arginine. Its pathway is amino-acid biosynthesis; L-arginine biosynthesis; L-arginine from L-ornithine and carbamoyl phosphate: step 3/3. This Methylibium petroleiphilum (strain ATCC BAA-1232 / LMG 22953 / PM1) protein is Argininosuccinate lyase.